Consider the following 182-residue polypeptide: MKILDQKGKEFLLNSIRCINDFPKPGIVFRDITTLLNNKEAFNFLIDHLAARYEDANIDYIAGIESRGFIFGAALAARLRLPFVPIRKPKKLPFITLSQKYSLEYGVDEVQIHIDAFGEKAGARVLLMDDLIATGGTAKASVELINQTNATCVEACFLIDLVDLKGSEKLKSLTKIYSVLEV.

The protein belongs to the purine/pyrimidine phosphoribosyltransferase family. As to quaternary structure, homodimer.

The protein localises to the cytoplasm. It catalyses the reaction AMP + diphosphate = 5-phospho-alpha-D-ribose 1-diphosphate + adenine. It participates in purine metabolism; AMP biosynthesis via salvage pathway; AMP from adenine: step 1/1. Functionally, catalyzes a salvage reaction resulting in the formation of AMP, that is energically less costly than de novo synthesis. In Campylobacter concisus (strain 13826), this protein is Adenine phosphoribosyltransferase.